The chain runs to 159 residues: Aspartate carbamoyltransferase regulatory chain (159 aa).

Zn(2+)-binding residues include cysteine 108, cysteine 113, cysteine 138, and cysteine 141.

Belongs to the PyrI family. As to quaternary structure, contains catalytic and regulatory chains. The cofactor is Zn(2+).

Functionally, involved in allosteric regulation of aspartate carbamoyltransferase. This is Aspartate carbamoyltransferase regulatory chain from Thermofilum pendens (strain DSM 2475 / Hrk 5).